A 212-amino-acid chain; its full sequence is Ribonuclease HII (212 aa).

Positions Met1–Ile206 constitute an RNase H type-2 domain. A divalent metal cation contacts are provided by Asp7, Glu8, and Asp104.

Belongs to the RNase HII family. Mn(2+) serves as cofactor. The cofactor is Mg(2+).

The protein resides in the cytoplasm. The catalysed reaction is Endonucleolytic cleavage to 5'-phosphomonoester.. In terms of biological role, endonuclease that specifically degrades the RNA of RNA-DNA hybrids. The polypeptide is Ribonuclease HII (Sulfolobus acidocaldarius (strain ATCC 33909 / DSM 639 / JCM 8929 / NBRC 15157 / NCIMB 11770)).